We begin with the raw amino-acid sequence, 507 residues long: Glucose-6-phosphate 1-dehydrogenase (507 aa).

2 residues coordinate NADP(+): R57 and K168. The substrate site is built by H198, K202, E236, and D255. H260 serves as the catalytic Proton acceptor. K356 is a binding site for substrate.

Belongs to the glucose-6-phosphate dehydrogenase family.

It catalyses the reaction D-glucose 6-phosphate + NADP(+) = 6-phospho-D-glucono-1,5-lactone + NADPH + H(+). Its pathway is carbohydrate degradation; pentose phosphate pathway; D-ribulose 5-phosphate from D-glucose 6-phosphate (oxidative stage): step 1/3. Its function is as follows. Catalyzes the oxidation of glucose 6-phosphate to 6-phosphogluconolactone. The polypeptide is Glucose-6-phosphate 1-dehydrogenase (Chlamydia muridarum (strain MoPn / Nigg)).